The following is a 372-amino-acid chain: Putative glutamate--cysteine ligase 2 (372 aa).

Belongs to the glutamate--cysteine ligase type 2 family. YbdK subfamily. In terms of assembly, homodimer.

The enzyme catalyses L-cysteine + L-glutamate + ATP = gamma-L-glutamyl-L-cysteine + ADP + phosphate + H(+). Its function is as follows. ATP-dependent carboxylate-amine ligase which exhibits weak glutamate--cysteine ligase activity. In Salmonella arizonae (strain ATCC BAA-731 / CDC346-86 / RSK2980), this protein is Putative glutamate--cysteine ligase 2 (ybdK).